Consider the following 267-residue polypeptide: Chorismate mutase (267 aa).

Residues 7–262 (LSDASKALDL…EVEYLMQRLK (256 aa)) enclose the Chorismate mutase domain. Residues Arg-77, Arg-78, Asn-145, Gly-147, Ser-148, and Thr-151 each coordinate L-tyrosine. L-tryptophan is bound by residues Asn-145, Gly-147, and Ser-148.

In terms of assembly, homodimer.

It localises to the cytoplasm. The catalysed reaction is chorismate = prephenate. Its pathway is metabolic intermediate biosynthesis; prephenate biosynthesis; prephenate from chorismate: step 1/1. Each dimer has two allosteric binding sites that can bind the regulatory effectors tryptophan or tyrosine. Can bind either one tryptophan or one tyrosine, two tryptophan or two tyrosine or one tryptophan and one tyrosine, which differentially affect the catalytic activity. Activated by tryptophan and subject to feedback inhibition by tyrosine. In the presence of both tryptophan and tyrosine, the enzyme is in the activated state. Catalyzes the Claisen rearrangement of chorismate to prephenate. Acts at the first branch point in the aromatic amino acid pathway where it steers biosynthesis towards phenylalanine and tyrosine, and away from tryptophan. The polypeptide is Chorismate mutase (Emericella nidulans (strain FGSC A4 / ATCC 38163 / CBS 112.46 / NRRL 194 / M139) (Aspergillus nidulans)).